A 227-amino-acid chain; its full sequence is MTDIAMLPESWREVLGGELQQPYFKELMEFVEEERANGPVYPPREEVFAALDATPFDRVKVLVLGQDPYHGEGQGHGLCFSVRPGVKVPPSLRNIYKEMHAELDTPIPDNGYLMPWAEQGVLLLNAVLTVRAGEANSHKSRGWELFTDAVIRAVAARTDPAVFVLWGNYAQKKLPLIDEARHVVVKGAHPSPLSAKKFFGSRPFTQINEAVAGQGHEPIDWTIPNLG.

The active-site Proton acceptor is aspartate 67.

Belongs to the uracil-DNA glycosylase (UDG) superfamily. UNG family.

The protein localises to the cytoplasm. It catalyses the reaction Hydrolyzes single-stranded DNA or mismatched double-stranded DNA and polynucleotides, releasing free uracil.. Excises uracil residues from the DNA which can arise as a result of misincorporation of dUMP residues by DNA polymerase or due to deamination of cytosine. In Streptomyces coelicolor (strain ATCC BAA-471 / A3(2) / M145), this protein is Uracil-DNA glycosylase 2 (ung2).